The following is a 226-amino-acid chain: Uracil-DNA glycosylase (226 aa).

Asp-68 serves as the catalytic Proton acceptor.

This sequence belongs to the uracil-DNA glycosylase (UDG) superfamily. UNG family.

Its subcellular location is the cytoplasm. It catalyses the reaction Hydrolyzes single-stranded DNA or mismatched double-stranded DNA and polynucleotides, releasing free uracil.. Excises uracil residues from the DNA which can arise as a result of misincorporation of dUMP residues by DNA polymerase or due to deamination of cytosine. The sequence is that of Uracil-DNA glycosylase from Mycobacteroides abscessus (strain ATCC 19977 / DSM 44196 / CCUG 20993 / CIP 104536 / JCM 13569 / NCTC 13031 / TMC 1543 / L948) (Mycobacterium abscessus).